Reading from the N-terminus, the 266-residue chain is Gap junction beta-4 protein (266 aa).

The stretch at 2–13 is an intramembrane region; the sequence is NWGFLQGILSGV. At 14-20 the chain is on the cytoplasmic side; it reads NKYSTAL. A helical membrane pass occupies residues 21-40; it reads GRIWLSVVFIFRVLVYVVAA. The Extracellular portion of the chain corresponds to 41 to 73; it reads EEVWDDDQKDFICNTKQPGCPNVCYDEFFPVSH. Intrachain disulfides connect Cys-53–Cys-175, Cys-60–Cys-169, and Cys-64–Cys-164. The chain crosses the membrane as a helical span at residues 74–94; the sequence is VRLWALQLILVTCPSLLVVMH. Residues 95 to 130 are Cytoplasmic-facing; it reads VAYREERERKHRLKHGPNAPALYSNLSKKRGGLWWT. Residues 131 to 151 form a helical membrane-spanning segment; sequence YLLSLIFKAAVDSGFLYIFHC. Over 152–184 the chain is Extracellular; the sequence is IYKDYDMPRVVACSVTPCPHTVDCYIARPTEKK. The helical transmembrane segment at 185-205 threads the bilayer; that stretch reads VFTYFMVVTAAICILLNLSEV. Residues 206–266 are Cytoplasmic-facing; sequence VYLVGKRCME…MATVDAGVYP (61 aa).

Belongs to the connexin family. Beta-type (group I) subfamily. A hemichannel or connexon is composed of a hexamer of connexins. A functional gap junction is formed by the apposition of two hemichannels. Forms heteromeric channels with GJB2. As to expression, detected in cochlea (at protein level). Detected in cochlea. Expressed in skin.

The protein localises to the cell membrane. It localises to the cell junction. The protein resides in the gap junction. Functionally, structural component of gap junctions. Gap junctions are dodecameric channels that connect the cytoplasm of adjoining cells. They are formed by the docking of two hexameric hemichannels, one from each cell membrane. Small molecules and ions diffuse from one cell to a neighboring cell via the central pore. This is Gap junction beta-4 protein (Gjb4) from Mus musculus (Mouse).